Consider the following 153-residue polypeptide: Probable histone H2A.4 (153 aa).

Positions 1–12 are enriched in basic residues; it reads MDSGTKVKKGAA. Disordered stretches follow at residues 1–30 and 129–153; these read MDSGTKVKKGAAGRRSGGGPKKKPVSRSVK and KSEKAASTTKTPKSPSKATKSPKKS. The segment covering 133-147 has biased composition (low complexity); sequence AASTTKTPKSPSKAT. The short motif at 149 to 152 is the SPKK motif element; sequence SPKK.

The protein belongs to the histone H2A family. The nucleosome is a histone octamer containing two molecules each of H2A, H2B, H3 and H4 assembled in one H3-H4 heterotetramer and two H2A-H2B heterodimers. The octamer wraps approximately 147 bp of DNA. Post-translationally, not ubiquitinated.

The protein localises to the nucleus. It localises to the chromosome. Core component of nucleosome. Nucleosomes wrap and compact DNA into chromatin, limiting DNA accessibility to the cellular machineries which require DNA as a template. Histones thereby play a central role in transcription regulation, DNA repair, DNA replication and chromosomal stability. DNA accessibility is regulated via a complex set of post-translational modifications of histones, also called histone code, and nucleosome remodeling. The protein is Probable histone H2A.4 of Arabidopsis thaliana (Mouse-ear cress).